Here is a 154-residue protein sequence, read N- to C-terminus: Deoxyuridine 5'-triphosphate nucleotidohydrolase (154 aa).

Substrate-binding positions include 72–74, asparagine 85, 89–91, and methionine 99; these read RSG and LID.

The protein belongs to the dUTPase family. Mg(2+) is required as a cofactor.

It catalyses the reaction dUTP + H2O = dUMP + diphosphate + H(+). The protein operates within pyrimidine metabolism; dUMP biosynthesis; dUMP from dCTP (dUTP route): step 2/2. In terms of biological role, this enzyme is involved in nucleotide metabolism: it produces dUMP, the immediate precursor of thymidine nucleotides and it decreases the intracellular concentration of dUTP so that uracil cannot be incorporated into DNA. This chain is Deoxyuridine 5'-triphosphate nucleotidohydrolase, found in Psychrobacter sp. (strain PRwf-1).